We begin with the raw amino-acid sequence, 155 residues long: Ribonuclease H (155 aa).

The region spanning 7–150 is the RNase H type-1 domain; it reads AQNAVDLYTD…ADKLACKGRD (144 aa). Mg(2+) contacts are provided by D16, E54, D77, and D142.

It belongs to the RNase H family. Monomer. Requires Mg(2+) as cofactor.

The protein localises to the cytoplasm. It carries out the reaction Endonucleolytic cleavage to 5'-phosphomonoester.. In terms of biological role, endonuclease that specifically degrades the RNA of RNA-DNA hybrids. This Saccharopolyspora erythraea (strain ATCC 11635 / DSM 40517 / JCM 4748 / NBRC 13426 / NCIMB 8594 / NRRL 2338) protein is Ribonuclease H.